Reading from the N-terminus, the 140-residue chain is Nuclear receptor 2C2-associated protein (140 aa).

Belongs to the NR2C2AP family. In terms of assembly, interacts with NR2C2/TR4.

Its subcellular location is the nucleus. Functionally, may act as a repressor of NR2C2-mediated transactivation by suppressing the binding between NR2C2/TR4 and the TR4-response element in target genes. This Bos taurus (Bovine) protein is Nuclear receptor 2C2-associated protein (NR2C2AP).